A 567-amino-acid chain; its full sequence is Proline--tRNA ligase (567 aa).

It belongs to the class-II aminoacyl-tRNA synthetase family. ProS type 1 subfamily. Homodimer.

It localises to the cytoplasm. The enzyme catalyses tRNA(Pro) + L-proline + ATP = L-prolyl-tRNA(Pro) + AMP + diphosphate. Its function is as follows. Catalyzes the attachment of proline to tRNA(Pro) in a two-step reaction: proline is first activated by ATP to form Pro-AMP and then transferred to the acceptor end of tRNA(Pro). As ProRS can inadvertently accommodate and process non-cognate amino acids such as alanine and cysteine, to avoid such errors it has two additional distinct editing activities against alanine. One activity is designated as 'pretransfer' editing and involves the tRNA(Pro)-independent hydrolysis of activated Ala-AMP. The other activity is designated 'posttransfer' editing and involves deacylation of mischarged Ala-tRNA(Pro). The misacylated Cys-tRNA(Pro) is not edited by ProRS. In Campylobacter fetus subsp. fetus (strain 82-40), this protein is Proline--tRNA ligase.